The chain runs to 66 residues: Large ribosomal subunit protein bL35 (66 aa).

It belongs to the bacterial ribosomal protein bL35 family.

This chain is Large ribosomal subunit protein bL35, found in Synechococcus sp. (strain RCC307).